The following is a 199-amino-acid chain: Recombination protein RecR (199 aa).

The segment at 58 to 73 (CLVCGNVTGSDICPIC) adopts a C4-type zinc-finger fold. The region spanning 81 to 176 (GEICVVTDVA…AVTGLAQGVP (96 aa)) is the Toprim domain.

This sequence belongs to the RecR family.

Functionally, may play a role in DNA repair. It seems to be involved in an RecBC-independent recombinational process of DNA repair. It may act with RecF and RecO. The polypeptide is Recombination protein RecR (Paracoccus denitrificans (strain Pd 1222)).